The chain runs to 555 residues: Protein NRT1/ PTR FAMILY 2.1 (555 aa).

Transmembrane regions (helical) follow at residues 32-52 (TLLG…VFLI), 68-88 (IVNG…DSFF), 91-111 (IPVI…LTLI), 127-147 (ILCQ…LALV), 175-195 (FFNW…TAIV), 205-225 (LGFG…ISGK), 324-344 (VLPL…QASM), 369-389 (VIVL…IYPI), 401-421 (LQQV…SAIV), 437-457 (VLWL…HYMA), 476-496 (SVTS…INLI), and 517-537 (WVLV…SWYF).

It belongs to the major facilitator superfamily. Proton-dependent oligopeptide transporter (POT/PTR) (TC 2.A.17) family. As to expression, expressed in roots.

It localises to the membrane. Transporter involved in a passive nitrate efflux. This Arabidopsis thaliana (Mouse-ear cress) protein is Protein NRT1/ PTR FAMILY 2.1 (NPF2.1).